The following is a 113-amino-acid chain: Large ribosomal subunit protein uL22 (113 aa).

It belongs to the universal ribosomal protein uL22 family. In terms of assembly, part of the 50S ribosomal subunit.

This protein binds specifically to 23S rRNA; its binding is stimulated by other ribosomal proteins, e.g. L4, L17, and L20. It is important during the early stages of 50S assembly. It makes multiple contacts with different domains of the 23S rRNA in the assembled 50S subunit and ribosome. Its function is as follows. The globular domain of the protein is located near the polypeptide exit tunnel on the outside of the subunit, while an extended beta-hairpin is found that lines the wall of the exit tunnel in the center of the 70S ribosome. This chain is Large ribosomal subunit protein uL22, found in Halothermothrix orenii (strain H 168 / OCM 544 / DSM 9562).